We begin with the raw amino-acid sequence, 294 residues long: MSVISMKNLLETGVHFGHQTRKWNPKMAPYVFTARNGIHIIDLQKTVQKAKEAYDALKKLTSEGKKVLFVGTKKQARGAIEREALHSNMFFINNRWPGGLLTNWNTVKKSIARLKKLEAMEADNSFEKEVKTKKEVLTLRRELEKLRKTLGGIKDMATIPEIMFVIDPKKEEIAVKEARKLGLKIFAVVDTNCDPELIDYPIPGNDDAIRAISLFLETMSNAVIEGTGGVVEQPRFSEDLDSEALALEYQGEYDESGKFIMDEDADSKKSKAEEPVIPTAEEPAITTIEVDQNE.

Residues 261–274 (MDEDADSKKSKAEE) show a composition bias toward basic and acidic residues. The interval 261 to 294 (MDEDADSKKSKAEEPVIPTAEEPAITTIEVDQNE) is disordered.

This sequence belongs to the universal ribosomal protein uS2 family.

This chain is Small ribosomal subunit protein uS2, found in Leptospira borgpetersenii serovar Hardjo-bovis (strain JB197).